The following is a 612-amino-acid chain: Actin-binding LIM protein 2 (612 aa).

4 LIM zinc-binding domains span residues 22-81 (ILCN…LYGT), 81-141 (TRCF…TLVG), 151-210 (RSCG…KFGI), and 210-270 (IRCD…ARTE). Residues Cys83, Cys86, His103, Cys106, Cys109, Cys112, Cys131, and Cys134 each coordinate Zn(2+). Residues Cys212, Cys215, His232, Cys235, Cys238, Cys241, His260, and Cys263 each coordinate Zn(2+). Residues 269–278 (TEDKSKETRT) are compositionally biased toward basic and acidic residues. 2 disordered regions span residues 269 to 295 (TEDK…SGSP) and 341 to 433 (AVGD…DNIY). Composition is skewed to low complexity over residues 279 to 295 (SSES…SGSP) and 364 to 373 (SSPSSAGSVS). Phosphoserine is present on residues Ser282, Ser294, Ser365, and Ser368. The segment covering 394–416 (SGRSTPSLSVHSDSRPPSSTYQQ) has biased composition (polar residues). Ser453 carries the post-translational modification Phosphoserine. A disordered region spans residues 471 to 520 (ADTRTNSPDLDSQSLSLSSGADQEPLQRMPGDSLYSRFPYSKPDTLPGPR). Position 473 is a phosphothreonine (Thr473). Phosphoserine occurs at positions 477 and 579. Low complexity predominate over residues 477–489 (SPDLDSQSLSLSS). In terms of domain architecture, HP spans 544–612 (TREYKIYPYD…NDLKKKALLF (69 aa)).

Interacts with F-actin and ABRA.

The protein resides in the cytoplasm. In terms of biological role, may act as scaffold protein. May stimulate ABRA activity and ABRA-dependent SRF transcriptional activity. The sequence is that of Actin-binding LIM protein 2 (Ablim2) from Rattus norvegicus (Rat).